Consider the following 431-residue polypeptide: UDP-N-acetylmuramate--L-alanine ligase (431 aa).

108–114 (GAHGKST) serves as a coordination point for ATP.

Belongs to the MurCDEF family.

It is found in the cytoplasm. It carries out the reaction UDP-N-acetyl-alpha-D-muramate + L-alanine + ATP = UDP-N-acetyl-alpha-D-muramoyl-L-alanine + ADP + phosphate + H(+). The protein operates within cell wall biogenesis; peptidoglycan biosynthesis. In terms of biological role, cell wall formation. The sequence is that of UDP-N-acetylmuramate--L-alanine ligase from Campylobacter jejuni (strain RM1221).